The primary structure comprises 307 residues: Acyl transferase (307 aa).

Active-site charge relay system residues include Ser-116, Asp-213, and His-243.

It belongs to the LuxD family.

Its pathway is lipid metabolism; fatty acid reduction for biolumincescence. In terms of biological role, acyl transferase is part of the fatty acid reductase system required for aldehyde biosynthesis; it produces fatty acids for the luminescent reaction. The sequence is that of Acyl transferase from Photorhabdus luminescens (Xenorhabdus luminescens).